The sequence spans 179 residues: UPF0316 protein BH0621 (179 aa).

3 helical membrane passes run 9–29 (ALTMILIILIINVVYVTLFTV), 41–61 (LAATVSMIEIIVYVLGLSLVL), and 67–87 (IENLIAYAVGYGIGVITGMKV).

Belongs to the UPF0316 family.

It localises to the cell membrane. The sequence is that of UPF0316 protein BH0621 from Halalkalibacterium halodurans (strain ATCC BAA-125 / DSM 18197 / FERM 7344 / JCM 9153 / C-125) (Bacillus halodurans).